The chain runs to 308 residues: Ribosomal RNA small subunit methyltransferase H (308 aa).

S-adenosyl-L-methionine is bound by residues 36–38 (GGH), Asp55, Phe86, Asp103, and Gln110.

It belongs to the methyltransferase superfamily. RsmH family.

Its subcellular location is the cytoplasm. It carries out the reaction cytidine(1402) in 16S rRNA + S-adenosyl-L-methionine = N(4)-methylcytidine(1402) in 16S rRNA + S-adenosyl-L-homocysteine + H(+). In terms of biological role, specifically methylates the N4 position of cytidine in position 1402 (C1402) of 16S rRNA. The polypeptide is Ribosomal RNA small subunit methyltransferase H (Helicobacter pylori (strain B38)).